Reading from the N-terminus, the 432-residue chain is Histidinol dehydrogenase (432 aa).

3 residues coordinate NAD(+): Tyr-133, Gln-194, and Asn-217. The substrate site is built by Ser-240, Gln-262, and His-265. Gln-262 and His-265 together coordinate Zn(2+). Active-site proton acceptor residues include Glu-330 and His-331. Residues His-331, Asp-364, Glu-418, and His-423 each contribute to the substrate site. Asp-364 is a Zn(2+) binding site. Residue His-423 participates in Zn(2+) binding.

It belongs to the histidinol dehydrogenase family. The cofactor is Zn(2+).

It catalyses the reaction L-histidinol + 2 NAD(+) + H2O = L-histidine + 2 NADH + 3 H(+). Its pathway is amino-acid biosynthesis; L-histidine biosynthesis; L-histidine from 5-phospho-alpha-D-ribose 1-diphosphate: step 9/9. Catalyzes the sequential NAD-dependent oxidations of L-histidinol to L-histidinaldehyde and then to L-histidine. This is Histidinol dehydrogenase from Nitrosomonas europaea (strain ATCC 19718 / CIP 103999 / KCTC 2705 / NBRC 14298).